A 139-amino-acid polypeptide reads, in one-letter code: Large ribosomal subunit protein uL16 (139 aa).

Belongs to the universal ribosomal protein uL16 family. Part of the 50S ribosomal subunit.

In terms of biological role, binds 23S rRNA and is also seen to make contacts with the A and possibly P site tRNAs. This chain is Large ribosomal subunit protein uL16, found in Parvibaculum lavamentivorans (strain DS-1 / DSM 13023 / NCIMB 13966).